The sequence spans 863 residues: Glycogen phosphorylase (863 aa).

N6-(pyridoxal phosphate)lysine is present on Lys-618.

It belongs to the glycogen phosphorylase family. Requires pyridoxal 5'-phosphate as cofactor.

It catalyses the reaction [(1-&gt;4)-alpha-D-glucosyl](n) + phosphate = [(1-&gt;4)-alpha-D-glucosyl](n-1) + alpha-D-glucose 1-phosphate. Functionally, phosphorylase is an important allosteric enzyme in carbohydrate metabolism. Enzymes from different sources differ in their regulatory mechanisms and in their natural substrates. However, all known phosphorylases share catalytic and structural properties. The sequence is that of Glycogen phosphorylase (glgP) from Mycobacterium bovis (strain ATCC BAA-935 / AF2122/97).